We begin with the raw amino-acid sequence, 148 residues long: Large ribosomal subunit protein bL9 (148 aa).

Belongs to the bacterial ribosomal protein bL9 family.

Its function is as follows. Binds to the 23S rRNA. In Staphylococcus aureus (strain bovine RF122 / ET3-1), this protein is Large ribosomal subunit protein bL9.